The following is a 293-amino-acid chain: Elongation factor Ts (293 aa).

The involved in Mg(2+) ion dislocation from EF-Tu stretch occupies residues 79–82 (TDFV).

This sequence belongs to the EF-Ts family.

The protein localises to the cytoplasm. Functionally, associates with the EF-Tu.GDP complex and induces the exchange of GDP to GTP. It remains bound to the aminoacyl-tRNA.EF-Tu.GTP complex up to the GTP hydrolysis stage on the ribosome. This chain is Elongation factor Ts, found in Bacillus velezensis (strain DSM 23117 / BGSC 10A6 / LMG 26770 / FZB42) (Bacillus amyloliquefaciens subsp. plantarum).